The sequence spans 403 residues: Glycerophosphocholine acyltransferase 1 (403 aa).

At 1-112 the chain is on the cytoplasmic side; sequence MDHLEFDENT…SGKVVRFRDK (112 aa). The chain crosses the membrane as a helical span at residues 113 to 133; it reads LSFALGVSTCILTALLVGMAP. Topologically, residues 134–137 are lumenal; it reads ESMH. Residues 138–155 traverse the membrane as a helical segment; that stretch reads LWYTIQLFVYLPLRYYTY. Residues 156–161 lie on the Cytoplasmic side of the membrane; it reads QRKGYE. A helical transmembrane segment spans residues 162–182; that stretch reads YFIADFCYWGNILLLVYIWIF. The Lumenal segment spans residues 183–186; that stretch reads PESR. A helical membrane pass occupies residues 187-207; the sequence is RLFILSYSISYGTLAWSVVAW. Over 208–218 the chain is Cytoplasmic; it reads RNSLLFHSIDK. The chain crosses the membrane as a helical span at residues 219 to 239; it reads ITSLFIHFFPPLVLHTIVHLT. N-linked (GlcNAc...) asparagine glycosylation occurs at Asn-240. Residues 240–262 are Lumenal-facing; it reads NKSYLKDRFPAVLKVKKIDLLSS. Residues 263–283 form a helical membrane-spanning segment; the sequence is VEIASFFYALWQIWYYFFIQV. Residues 284–322 are Cytoplasmic-facing; the sequence is GKQKQIQEGRPTSFTWLSKAYSKTKLGRAVAKLPQNLQP. Residues 323 to 343 traverse the membrane as a helical segment; sequence FVFMIIQYLYSITTMLPCSLW. Residues 344–352 lie on the Lumenal side of the membrane; sequence YNNKLYSTA. Residues 353 to 373 form a helical membrane-spanning segment; sequence FLALIFGWSVWNGASYYIDVF. Topologically, residues 374–403 are cytoplasmic; sequence GRRFQKELEALRQQLAETPTNSGSSSALSR.

This sequence belongs to the GPC1 family.

It is found in the endoplasmic reticulum membrane. The protein resides in the golgi apparatus membrane. It catalyses the reaction sn-glycerol 3-phosphocholine + an acyl-CoA = a 1-acyl-sn-glycero-3-phosphocholine + CoA. It carries out the reaction sn-glycero-3-phosphoethanolamine + an acyl-CoA = a monoacyl-sn-glycero-3-phosphoethanolamine + CoA. The enzyme catalyses sn-glycero-3-phosphoethanolamine + (9Z)-octadecenoyl-CoA = (9Z-octadecenoyl)-sn-glycero-3-phosphoethanolamine + CoA. Glycerophosphocholine acyltransferase (GPCAT) that utilizes acyl-CoA to acylate glycero-3-phosphocholine (GPC), forming lysophosphatidylcholine (LPC). Shows broad acyl specificities with a preference for 16:0-CoA, polyunsaturated acyl-CoA, and the hydroxylated ricinoleoyl-CoA. Also catalyzes the acylation of glycero-3-phosphoethanolamine (GPE) with acyl-CoA. In addition to acyl-CoA, GPCAT efficiently utilizes LPC and lysophosphatidylethanolamine (LPE) as acyl donors in the acylation of GPC. Contributes to the maintenance of phosphatidylcholine (PC) homeostasis and might also have specific functions in acyl editing of PC, such as transferring acyl groups modified at the sn-2 position of PC to the sn-1. The sequence is that of Glycerophosphocholine acyltransferase 1 from Schizosaccharomyces pombe (strain 972 / ATCC 24843) (Fission yeast).